The sequence spans 166 residues: NAD(P)H-quinone oxidoreductase subunit I, chloroplastic (166 aa).

2 consecutive 4Fe-4S ferredoxin-type domains span residues 55 to 84 (GRIHFEFDKCIACEVCVRVCPIDLPVVDWK) and 95 to 124 (LNYSIDFGICIFCGNCVEYCPTNCLSMTEE). Positions 64, 67, 70, 74, 104, 107, 110, and 114 each coordinate [4Fe-4S] cluster.

It belongs to the complex I 23 kDa subunit family. NDH is composed of at least 16 different subunits, 5 of which are encoded in the nucleus. The cofactor is [4Fe-4S] cluster.

The protein localises to the plastid. The protein resides in the chloroplast thylakoid membrane. The catalysed reaction is a plastoquinone + NADH + (n+1) H(+)(in) = a plastoquinol + NAD(+) + n H(+)(out). It catalyses the reaction a plastoquinone + NADPH + (n+1) H(+)(in) = a plastoquinol + NADP(+) + n H(+)(out). NDH shuttles electrons from NAD(P)H:plastoquinone, via FMN and iron-sulfur (Fe-S) centers, to quinones in the photosynthetic chain and possibly in a chloroplast respiratory chain. The immediate electron acceptor for the enzyme in this species is believed to be plastoquinone. Couples the redox reaction to proton translocation, and thus conserves the redox energy in a proton gradient. The protein is NAD(P)H-quinone oxidoreductase subunit I, chloroplastic of Palafoxia arida (Spanish needles).